The following is a 63-amino-acid chain: Conotoxin TeAr193 (63 aa).

The N-terminal stretch at 1-22 (MRCLPVFVILLLLIASAPSVDA) is a signal peptide. A propeptide spanning residues 23–48 (QPKTKDDIPQASFLDNAKRYLQVLES) is cleaved from the precursor.

Belongs to the conotoxin T superfamily. In terms of processing, contains 2 disulfide bonds that can be either 'C1-C3, C2-C4' or 'C1-C4, C2-C3', since these disulfide connectivities have been observed for conotoxins with cysteine framework V (for examples, see AC P0DQQ7 and AC P81755). As to expression, expressed by the venom duct.

Its subcellular location is the secreted. The sequence is that of Conotoxin TeAr193 from Conus textile (Cloth-of-gold cone).